Here is a 163-residue protein sequence, read N- to C-terminus: Troponin C, skeletal muscle (163 aa).

Ala-2 carries the blocked amino end (Ala) modification. EF-hand domains follow at residues Glu-18 to Asn-53, Pro-54 to Glu-89, Lys-94 to His-129, and Val-130 to Gln-163. Positions 31, 33, 37, 42, 67, 69, 71, 73, 78, 107, 109, 111, 118, 143, 145, 147, 149, and 154 each coordinate Ca(2+).

Belongs to the troponin C family.

In terms of biological role, troponin is the central regulatory protein of striated muscle contraction. Tn consists of three components: Tn-I which is the inhibitor of actomyosin ATPase, Tn-T which contains the binding site for tropomyosin and Tn-C. The binding of calcium to Tn-C abolishes the inhibitory action of Tn on actin filaments. This Gallus gallus (Chicken) protein is Troponin C, skeletal muscle (TNNC2).